Consider the following 213-residue polypeptide: Holliday junction resolvase RecU (213 aa).

The Mg(2+) site is built by Thr98, Asp100, Glu113, and Gln132.

The protein belongs to the RecU family. The cofactor is Mg(2+).

It is found in the cytoplasm. The enzyme catalyses Endonucleolytic cleavage at a junction such as a reciprocal single-stranded crossover between two homologous DNA duplexes (Holliday junction).. In terms of biological role, endonuclease that resolves Holliday junction intermediates in genetic recombination. Cleaves mobile four-strand junctions by introducing symmetrical nicks in paired strands. Promotes annealing of linear ssDNA with homologous dsDNA. Required for DNA repair, homologous recombination and chromosome segregation. In Ligilactobacillus salivarius (strain UCC118) (Lactobacillus salivarius), this protein is Holliday junction resolvase RecU.